A 445-amino-acid chain; its full sequence is 23S rRNA (uracil(1939)-C(5))-methyltransferase RlmD (445 aa).

The TRAM domain occupies Ser12 to Lys70. Residues Cys83, Cys89, Cys92, and Cys171 each contribute to the [4Fe-4S] cluster site. Positions 278, 307, 312, 328, 355, and 375 each coordinate S-adenosyl-L-methionine. Catalysis depends on Cys401, which acts as the Nucleophile.

This sequence belongs to the class I-like SAM-binding methyltransferase superfamily. RNA M5U methyltransferase family. RlmD subfamily.

The catalysed reaction is uridine(1939) in 23S rRNA + S-adenosyl-L-methionine = 5-methyluridine(1939) in 23S rRNA + S-adenosyl-L-homocysteine + H(+). Functionally, catalyzes the formation of 5-methyl-uridine at position 1939 (m5U1939) in 23S rRNA. The protein is 23S rRNA (uracil(1939)-C(5))-methyltransferase RlmD of Shewanella halifaxensis (strain HAW-EB4).